Here is a 421-residue protein sequence, read N- to C-terminus: Adenylosuccinate synthetase (421 aa).

GTP is bound by residues 11 to 17 (GDEGKGK) and 39 to 41 (GHT). The active-site Proton acceptor is Asp-12. Residues Asp-12 and Gly-39 each contribute to the Mg(2+) site. Residues 12–15 (DEGK), 37–40 (NAGH), Thr-129, Arg-143, Asn-219, Thr-234, and Arg-298 each bind IMP. His-40 (proton donor) is an active-site residue. 294–300 (VTTGRRR) serves as a coordination point for substrate. GTP-binding positions include Arg-300, 326-328 (KLD), and 409-411 (GTG).

It belongs to the adenylosuccinate synthetase family. As to quaternary structure, homodimer. Mg(2+) serves as cofactor.

The protein resides in the cytoplasm. It catalyses the reaction IMP + L-aspartate + GTP = N(6)-(1,2-dicarboxyethyl)-AMP + GDP + phosphate + 2 H(+). Its pathway is purine metabolism; AMP biosynthesis via de novo pathway; AMP from IMP: step 1/2. Its function is as follows. Plays an important role in the de novo pathway and in the salvage pathway of purine nucleotide biosynthesis. Catalyzes the first committed step in the biosynthesis of AMP from IMP. The sequence is that of Adenylosuccinate synthetase from Paracoccidioides lutzii (strain ATCC MYA-826 / Pb01) (Paracoccidioides brasiliensis).